The primary structure comprises 183 residues: MTIKREMRNDKRTAPKAPINENISAREVRLIGADGEQIGIVSIDEALRIADEAKLDLVEISADAQPPVCKVMDYGKHLFEKKKQANEAKKNQKQIQIKEIKFRPGTEEGDYQVKLRNLVRFLSDGDKAKISLRFRGREMAHQELGMELLKRVETDLAEYGTVEQHPKMEGRQLMMVIAPKKKK.

Belongs to the IF-3 family. Monomer.

The protein localises to the cytoplasm. IF-3 binds to the 30S ribosomal subunit and shifts the equilibrium between 70S ribosomes and their 50S and 30S subunits in favor of the free subunits, thus enhancing the availability of 30S subunits on which protein synthesis initiation begins. The sequence is that of Translation initiation factor IF-3 from Pseudomonas entomophila (strain L48).